Consider the following 560-residue polypeptide: Protein NRT1/ PTR FAMILY 2.5 (560 aa).

Residues 1–20 (MADSKSGDTEVAHRSSDPSE) are disordered. The next 12 membrane-spanning stretches (helical) occupy residues 34-54 (TLLG…VFLI), 77-97 (MLPV…PVIS), 101-121 (FISL…YLMP), 141-161 (ILYV…FTLA), 177-197 (FFNW…TAIV), 207-227 (LGFG…IAGV), 323-343 (AILR…PVAV), 372-392 (VIVL…IYPM), 404-424 (LQQV…SAVV), 441-461 (VLWL…HFPA), 480-500 (SLTS…IDVI), and 520-540 (YWVV…CSWF).

The protein belongs to the major facilitator superfamily. Proton-dependent oligopeptide transporter (POT/PTR) (TC 2.A.17) family. Expressed in the root epidermis or cortex.

It localises to the membrane. Functionally, transporter involved in a passive nitrate efflux. This chain is Protein NRT1/ PTR FAMILY 2.5 (NPF2.5), found in Arabidopsis thaliana (Mouse-ear cress).